A 185-amino-acid polypeptide reads, in one-letter code: Peptidyl-tRNA hydrolase (185 aa).

Y14 is a binding site for tRNA. H19 (proton acceptor) is an active-site residue. 3 residues coordinate tRNA: F64, N66, and N112.

The protein belongs to the PTH family. Monomer.

It localises to the cytoplasm. The enzyme catalyses an N-acyl-L-alpha-aminoacyl-tRNA + H2O = an N-acyl-L-amino acid + a tRNA + H(+). Its function is as follows. Hydrolyzes ribosome-free peptidyl-tRNAs (with 1 or more amino acids incorporated), which drop off the ribosome during protein synthesis, or as a result of ribosome stalling. Catalyzes the release of premature peptidyl moieties from peptidyl-tRNA molecules trapped in stalled 50S ribosomal subunits, and thus maintains levels of free tRNAs and 50S ribosomes. The sequence is that of Peptidyl-tRNA hydrolase from Lactobacillus gasseri (strain ATCC 33323 / DSM 20243 / BCRC 14619 / CIP 102991 / JCM 1131 / KCTC 3163 / NCIMB 11718 / NCTC 13722 / AM63).